A 233-amino-acid chain; its full sequence is Large ribosomal subunit protein uL1 (233 aa).

The protein belongs to the universal ribosomal protein uL1 family. In terms of assembly, part of the 50S ribosomal subunit.

Functionally, binds directly to 23S rRNA. The L1 stalk is quite mobile in the ribosome, and is involved in E site tRNA release. In terms of biological role, protein L1 is also a translational repressor protein, it controls the translation of the L11 operon by binding to its mRNA. The protein is Large ribosomal subunit protein uL1 of Shewanella sp. (strain MR-4).